Here is a 594-residue protein sequence, read N- to C-terminus: Pre-mRNA-processing protein 45 (594 aa).

5 disordered regions span residues 36-63 (TTEYEEVPAPLPATPGPQLPKYGQRKGW), 223-254 (PPRFKHKKIPRGPAEPPPPVLQSPPRAATAQD), 370-426 (ETGI…SEMR), 498-523 (AGSSRNDESFGGGTEEGIKEEMSKDR), and 566-594 (EQFMDAARRGGKRTAEDRDEERRKRARDE). 2 stretches are compositionally biased toward pro residues: residues 44 to 53 (APLPATPGPQ) and 235 to 244 (PAEPPPPVLQ). Residues 383-397 (GSEEESDEEEEDEEA) show a composition bias toward acidic residues. 3 stretches are compositionally biased toward basic and acidic residues: residues 398–417 (IRERNIVREEKRREREKEMR), 513–523 (EGIKEEMSKDR), and 578–594 (RTAEDRDEERRKRARDE).

Belongs to the SNW family. Associated with the spliceosome.

Its subcellular location is the nucleus. Functionally, involved in pre-mRNA splicing. The sequence is that of Pre-mRNA-processing protein 45 (PRP45) from Cryptococcus neoformans var. neoformans serotype D (strain B-3501A) (Filobasidiella neoformans).